The primary structure comprises 298 residues: Tyrosine recombinase XerD (298 aa).

One can recognise a Core-binding (CB) domain in the interval 2 to 87; the sequence is KQDLARIEQF…AVRRLFQYLY (86 aa). The region spanning 108–292 is the Tyr recombinase domain; it reads RLPKDLSEAQ…ATERLRQLHQ (185 aa). Residues Arg-148, Lys-172, His-244, Arg-247, and His-270 contribute to the active site. Tyr-279 serves as the catalytic O-(3'-phospho-DNA)-tyrosine intermediate.

Belongs to the 'phage' integrase family. XerD subfamily. In terms of assembly, forms a cyclic heterotetrameric complex composed of two molecules of XerC and two molecules of XerD, in which XerC interacts with XerD via its C-terminal region, XerD interacts with XerC via its C-terminal region and so on.

It localises to the cytoplasm. With respect to regulation, ftsK may regulate the catalytic switch between XerC and XerD in the heterotetrameric complex during the two steps of the recombination process. Site-specific tyrosine recombinase, which acts by catalyzing the cutting and rejoining of the recombining DNA molecules. Binds cooperatively to specific DNA consensus sequences that are separated from XerC binding sites by a short central region, forming the heterotetrameric XerC-XerD complex that recombines DNA substrates. The complex is essential to convert dimers of the bacterial chromosome into monomers to permit their segregation at cell division. It also contributes to the segregational stability of plasmids. In the complex XerD specifically exchanges the bottom DNA strands. This Escherichia coli O157:H7 protein is Tyrosine recombinase XerD.